A 255-amino-acid chain; its full sequence is Small ribosomal subunit protein uS2 (255 aa).

The tract at residues 231–255 (RLQTGAEEEFSTEGEEVVEETPAEA) is disordered. Acidic residues predominate over residues 236–255 (AEEEFSTEGEEVVEETPAEA).

It belongs to the universal ribosomal protein uS2 family.

This chain is Small ribosomal subunit protein uS2, found in Geobacter sp. (strain M21).